The chain runs to 835 residues: Protein translocase subunit SecA (835 aa).

ATP-binding positions include Gln-85, 103–107, and Asp-492; that span reads GEGKT. The tract at residues 788–807 is disordered; that stretch reads VQGEAVHPSSDGEEAKKKPV. Zn(2+) contacts are provided by Cys-819, Cys-821, Cys-830, and Cys-831.

Belongs to the SecA family. Monomer and homodimer. Part of the essential Sec protein translocation apparatus which comprises SecA, SecYEG and auxiliary proteins SecDF. Other proteins may also be involved. It depends on Zn(2+) as a cofactor.

The protein resides in the cell membrane. It localises to the cytoplasm. The catalysed reaction is ATP + H2O + cellular proteinSide 1 = ADP + phosphate + cellular proteinSide 2.. Functionally, part of the Sec protein translocase complex. Interacts with the SecYEG preprotein conducting channel. Has a central role in coupling the hydrolysis of ATP to the transfer of proteins into and across the cell membrane, serving as an ATP-driven molecular motor driving the stepwise translocation of polypeptide chains across the membrane. The chain is Protein translocase subunit SecA from Bacillus cereus (strain ATCC 14579 / DSM 31 / CCUG 7414 / JCM 2152 / NBRC 15305 / NCIMB 9373 / NCTC 2599 / NRRL B-3711).